Consider the following 88-residue polypeptide: Large ribosomal subunit protein bL27 (88 aa).

Residues Met-1–Leu-21 are disordered.

This sequence belongs to the bacterial ribosomal protein bL27 family.

The protein is Large ribosomal subunit protein bL27 of Mycobacterium sp. (strain MCS).